Reading from the N-terminus, the 417-residue chain is MEHLKTQDPAVFEAIRQELGRQRDKIELIASENFVSEAVMEAQGSVLTNKYAEGYPGRRYYGGCEYVDIAEDVARDRAKQLFGAAYVNVQPHSGAQANMGVYFTILEHGDTVLGMNLSHGGHLTHGSPVNFSGIQYRFVEYGVREDDKRIDYEAVREAAKTHQPKLIVAGASAYPREIDFKKFREIADEVGAYLMVDMAHIAGLVAAGLHQNPVPYAHFVTTTTHKTLRGPRGGMILCNEETAEEFGKKLDKSIFPGIQGGPLMHVIAAKAVAFGEALSDEFKTYAKQIIANAKRLGEKLQAEGVDIVSGGTDNHLLLLDLRSLQLTGKVAEKALDAVGITTNKNAIPFDPEKPFVTSGIRIGTAAVTSRGFGENEMDEIGELIALTLKNIDNEEALNSVRSRVAALTKTFPMYPNL.

(6S)-5,6,7,8-tetrahydrofolate is bound by residues Leu117 and 121–123 (GHL). Lys226 bears the N6-(pyridoxal phosphate)lysine mark.

Belongs to the SHMT family. As to quaternary structure, homodimer. Requires pyridoxal 5'-phosphate as cofactor.

It is found in the cytoplasm. It carries out the reaction (6R)-5,10-methylene-5,6,7,8-tetrahydrofolate + glycine + H2O = (6S)-5,6,7,8-tetrahydrofolate + L-serine. The protein operates within one-carbon metabolism; tetrahydrofolate interconversion. Its pathway is amino-acid biosynthesis; glycine biosynthesis; glycine from L-serine: step 1/1. Catalyzes the reversible interconversion of serine and glycine with tetrahydrofolate (THF) serving as the one-carbon carrier. This reaction serves as the major source of one-carbon groups required for the biosynthesis of purines, thymidylate, methionine, and other important biomolecules. Also exhibits THF-independent aldolase activity toward beta-hydroxyamino acids, producing glycine and aldehydes, via a retro-aldol mechanism. The sequence is that of Serine hydroxymethyltransferase from Shouchella clausii (strain KSM-K16) (Alkalihalobacillus clausii).